The following is an 82-amino-acid chain: Apovitellenin-1 (82 aa).

This sequence belongs to the apovitellenin family. Monomer. As to expression, found in egg yolk and in plasma.

Protein component of the very low density lipoprotein (VLDL) of egg-laying females. Potent lipoprotein lipase inhibitor, preventing the loss of triglycerides from VLDL on their way from the liver to the growing oocytes. This chain is Apovitellenin-1, found in Anas platyrhynchos (Mallard).